Consider the following 218-residue polypeptide: Ribose-5-phosphate isomerase A (218 aa).

Residues 28–31, 81–84, and 94–97 each bind substrate; these read TGST, DSAD, and KGKG. Residue Glu-103 is the Proton acceptor of the active site. Position 121 (Lys-121) interacts with substrate.

This sequence belongs to the ribose 5-phosphate isomerase family. As to quaternary structure, homodimer.

It carries out the reaction aldehydo-D-ribose 5-phosphate = D-ribulose 5-phosphate. Its pathway is carbohydrate degradation; pentose phosphate pathway; D-ribose 5-phosphate from D-ribulose 5-phosphate (non-oxidative stage): step 1/1. Its function is as follows. Catalyzes the reversible conversion of ribose-5-phosphate to ribulose 5-phosphate. In Blochmanniella pennsylvanica (strain BPEN), this protein is Ribose-5-phosphate isomerase A.